The following is a 212-amino-acid chain: Large ribosomal subunit protein uL3 (212 aa).

Glutamine 153 carries the N5-methylglutamine modification.

This sequence belongs to the universal ribosomal protein uL3 family. In terms of assembly, part of the 50S ribosomal subunit. Forms a cluster with proteins L14 and L19. Methylated by PrmB.

Functionally, one of the primary rRNA binding proteins, it binds directly near the 3'-end of the 23S rRNA, where it nucleates assembly of the 50S subunit. The polypeptide is Large ribosomal subunit protein uL3 (Shewanella sediminis (strain HAW-EB3)).